The following is a 721-amino-acid chain: mRNA (2'-O-methyladenosine-N(6)-)-methyltransferase (721 aa).

Composition is skewed to polar residues over residues 1-10 (MTSENHTTIK) and 19-36 (PTGS…TSKP). Positions 1 to 37 (MTSENHTTIKADSALVMSPTGSTSQAAPFSPSTSKPI) are disordered. Positions 43–77 (ELIQAGWSKCWSKRENRPYYFNRFTNQSLWEMPVL) constitute a WW domain. The disordered stretch occupies residues 93-170 (PASGEANADA…KQGQASTPAP (78 aa)). Over residues 132-148 (IPATPTTPTVPISPSTP) the composition is skewed to low complexity. Arginine 239 and arginine 269 together coordinate substrate. 558–561 (NPPF) lines the S-adenosyl-L-methionine pocket. Residues glutamate 563 and 593-597 (WRDPP) each bind substrate. 619-621 (FEH) contributes to the S-adenosyl-L-methionine binding site. Residues 675-686 (SGRSLPSPGPSS) are compositionally biased toward low complexity. A disordered region spans residues 675 to 721 (SGRSLPSPGPSSTNTGEKDSKPAPERTAPSQDNSSPVDKTAQDTTNT). A compositionally biased stretch (polar residues) spans 702-721 (APSQDNSSPVDKTAQDTTNT).

Belongs to the CAPAM family.

The protein resides in the nucleus. It catalyses the reaction a 5'-end (N(7)-methyl 5'-triphosphoguanosine)-(2'-O-methyladenosine) in mRNA + S-adenosyl-L-methionine = a 5'-end (N(7)-methyl 5'-triphosphoguanosine)-(N(6),2'-O-dimethyladenosine) in mRNA + S-adenosyl-L-homocysteine + H(+). With respect to regulation, cap-specific adenosine methyltransferase activity is inhibited by zinc. Its function is as follows. Cap-specific adenosine methyltransferase that catalyzes formation of N(6),2'-O-dimethyladenosine cap (m6A(m)) by methylating the adenosine at the second transcribed position of capped mRNAs. The sequence is that of mRNA (2'-O-methyladenosine-N(6)-)-methyltransferase (pcif1) from Danio rerio (Zebrafish).